A 122-amino-acid chain; its full sequence is ATP synthase epsilon chain (122 aa).

The protein belongs to the ATPase epsilon chain family. As to quaternary structure, F-type ATPases have 2 components, CF(1) - the catalytic core - and CF(0) - the membrane proton channel. CF(1) has five subunits: alpha(3), beta(3), gamma(1), delta(1), epsilon(1). CF(0) has three main subunits: a, b and c.

It is found in the cell membrane. In terms of biological role, produces ATP from ADP in the presence of a proton gradient across the membrane. This Rhodococcus jostii (strain RHA1) protein is ATP synthase epsilon chain.